A 297-amino-acid chain; its full sequence is Protoheme IX farnesyltransferase 1 (297 aa).

Transmembrane regions (helical) follow at residues 23-43, 45-65, 93-113, 117-137, 145-165, 171-191, 216-236, 241-261, and 277-297; these read VVVLMLITSLAGMFLATRAGV, WSVLLFGNLGIGLCAGGAAVV, LPALLFALALALLGMVLLLVF, LTAWLTLASLLGYAVLYTGFL, IVIGGLAGAAPPLLGWVAVSG, PLLLVLIIFAWTPPHFWALAI, LHILLYTLILLAVSLLPYAIH, LYLACALGLGLRFLHWAWVLY, and IGYLFALFIALLLDHYLLLSL.

This sequence belongs to the UbiA prenyltransferase family. Protoheme IX farnesyltransferase subfamily.

It is found in the cell inner membrane. The enzyme catalyses heme b + (2E,6E)-farnesyl diphosphate + H2O = Fe(II)-heme o + diphosphate. It functions in the pathway porphyrin-containing compound metabolism; heme O biosynthesis; heme O from protoheme: step 1/1. Converts heme B (protoheme IX) to heme O by substitution of the vinyl group on carbon 2 of heme B porphyrin ring with a hydroxyethyl farnesyl side group. The polypeptide is Protoheme IX farnesyltransferase 1 (Pseudomonas putida (strain ATCC 700007 / DSM 6899 / JCM 31910 / BCRC 17059 / LMG 24140 / F1)).